Reading from the N-terminus, the 401-residue chain is Adenosine 3'-phospho 5'-phosphosulfate transporter 2 (401 aa).

N12 and N71 each carry an N-linked (GlcNAc...) asparagine glycan. 6 helical membrane-spanning segments follow: residues 78-98 (LTQF…YGYL), 114-134 (YLTL…LQLI), 147-167 (MIIA…LGYL), 170-190 (PTQV…GVFI), 196-216 (NVAD…FTLA), and 223-243 (NFNL…AVIG). N254 carries an N-linked (GlcNAc...) asparagine glycan. The next 4 helical transmembrane spans lie at 267 to 287 (IGFV…PAVT), 298 to 317 (GYAF…VLAL), 324 to 346 (LIAV…IFFA), and 349 to 369 (FTFQ…LNVY).

The protein belongs to the nucleotide-sugar transporter family. SLC35B subfamily. Preferentially and highly expressed in colon.

It localises to the golgi apparatus membrane. It catalyses the reaction 3'-phosphoadenylyl sulfate(in) + adenosine 3',5'-bisphosphate(out) = 3'-phosphoadenylyl sulfate(out) + adenosine 3',5'-bisphosphate(in). In terms of biological role, probably functions as a 3'-phosphoadenylyl sulfate:adenosine 3',5'-bisphosphate antiporter at the Golgi membranes. Mediates the transport from the cytosol into the lumen of the Golgi of 3'-phosphoadenylyl sulfate/adenosine 3'-phospho 5'-phosphosulfate (PAPS), a universal sulfuryl donor for sulfation events that take place in that compartment. This Homo sapiens (Human) protein is Adenosine 3'-phospho 5'-phosphosulfate transporter 2.